We begin with the raw amino-acid sequence, 335 residues long: Acetyl-coenzyme A carboxylase carboxyl transferase subunit alpha (335 aa).

Residues 48 to 308 (TLEKKVDALR…KGMLIEELKA (261 aa)) form the CoA carboxyltransferase C-terminal domain.

This sequence belongs to the AccA family. In terms of assembly, acetyl-CoA carboxylase is a heterohexamer composed of biotin carboxyl carrier protein (AccB), biotin carboxylase (AccC) and two subunits each of ACCase subunit alpha (AccA) and ACCase subunit beta (AccD).

It is found in the cytoplasm. It carries out the reaction N(6)-carboxybiotinyl-L-lysyl-[protein] + acetyl-CoA = N(6)-biotinyl-L-lysyl-[protein] + malonyl-CoA. The protein operates within lipid metabolism; malonyl-CoA biosynthesis; malonyl-CoA from acetyl-CoA: step 1/1. In terms of biological role, component of the acetyl coenzyme A carboxylase (ACC) complex. First, biotin carboxylase catalyzes the carboxylation of biotin on its carrier protein (BCCP) and then the CO(2) group is transferred by the carboxyltransferase to acetyl-CoA to form malonyl-CoA. The chain is Acetyl-coenzyme A carboxylase carboxyl transferase subunit alpha from Chlorobium luteolum (strain DSM 273 / BCRC 81028 / 2530) (Pelodictyon luteolum).